Reading from the N-terminus, the 286-residue chain is Glycine--tRNA ligase alpha subunit (286 aa).

Belongs to the class-II aminoacyl-tRNA synthetase family. Tetramer of two alpha and two beta subunits.

It localises to the cytoplasm. It catalyses the reaction tRNA(Gly) + glycine + ATP = glycyl-tRNA(Gly) + AMP + diphosphate. This Campylobacter lari (strain RM2100 / D67 / ATCC BAA-1060) protein is Glycine--tRNA ligase alpha subunit.